A 396-amino-acid chain; its full sequence is Tryptophan synthase beta chain (396 aa).

At K88 the chain carries N6-(pyridoxal phosphate)lysine.

This sequence belongs to the TrpB family. In terms of assembly, tetramer of two alpha and two beta chains. Pyridoxal 5'-phosphate serves as cofactor.

It catalyses the reaction (1S,2R)-1-C-(indol-3-yl)glycerol 3-phosphate + L-serine = D-glyceraldehyde 3-phosphate + L-tryptophan + H2O. The protein operates within amino-acid biosynthesis; L-tryptophan biosynthesis; L-tryptophan from chorismate: step 5/5. Functionally, the beta subunit is responsible for the synthesis of L-tryptophan from indole and L-serine. The polypeptide is Tryptophan synthase beta chain (Leptospira biflexa serovar Patoc (strain Patoc 1 / Ames)).